The chain runs to 454 residues: Protection of telomeres protein 1b (454 aa).

It belongs to the telombin family. As to quaternary structure, interacts with TRB1, TRB2 and TRB3. As to expression, expressed at low levels in roots, rosette leaves, cauline leaves, stems and flowers.

The protein resides in the nucleus. Its subcellular location is the chromosome. The protein localises to the telomere. Negatively regulates telomerase activity and participates in chromosome end protection. Binds RNA non-specifically. Associates with a regulatory Pol III-dependent lncRNA, which represses telomerase activity in response to DNA damage. Binds single-stranded telomeric DNA with weak affinity. The protein is Protection of telomeres protein 1b of Arabidopsis thaliana (Mouse-ear cress).